The sequence spans 448 residues: Rhodopsin (448 aa).

Topologically, residues 2 to 33 are extracellular; it reads GRDLRDNETWWYNPSIVVHPHWREFDQVPDAV. N-linked (GlcNAc...) asparagine glycosylation occurs at Asn-8. The helical transmembrane segment at 34–58 threads the bilayer; the sequence is YYSLGIFIGICGIIGCGGNGIVIYL. At 59–70 the chain is on the cytoplasmic side; it reads FTKTKSLQTPAN. A helical membrane pass occupies residues 71-97; the sequence is MFIINLAFSDFTFSLVNGFPLMTISCF. Residues 98–109 are Extracellular-facing; it reads LKKWIFGFAACK. Cys-108 and Cys-186 are oxidised to a cystine. A helical transmembrane segment spans residues 110 to 131; it reads VYGFIGGIFGFMSIMTMAMISI. The Cytoplasmic segment spans residues 132–151; that stretch reads DRYNVIGRPMAASKKMSHRR. The helical transmembrane segment at 152–172 threads the bilayer; sequence AFIMIIFVWLWSVLWAIGPIF. Over 173–199 the chain is Extracellular; it reads GWGAYTLEGVLCNCSFDYISRDSTTRS. A helical membrane pass occupies residues 200–224; sequence NILCMFILGFFGPILIIFFCYFNIV. Residues 225-261 are Cytoplasmic-facing; the sequence is MSVSNHEKEMAAMAKRLNAKELRKAQAGANAEMRLAK. The chain crosses the membrane as a helical span at residues 262–283; sequence ISIVIVSQFLLSWSPYAVVALL. Residues 284-293 lie on the Extracellular side of the membrane; sequence AQFGPLEWVT. The chain crosses the membrane as a helical span at residues 294 to 315; it reads PYAAQLPVMFAKASAIHNPMIY. At Lys-305 the chain carries N6-(retinylidene)lysine. The Cytoplasmic segment spans residues 316–448; sequence SVSHPKFREA…QGVDNQAYQA (133 aa). 2 S-palmitoyl cysteine lipidation sites follow: Cys-336 and Cys-337. Positions 343–352 are enriched in acidic residues; it reads ETEDDKDAET. Residues 343–448 form a disordered region; sequence ETEDDKDAET…QGVDNQAYQA (106 aa). The span at 359-391 shows a compositional bias: low complexity; sequence SSDAAPSADAAQMKEMMAMMQKMQQQQAAYPPQ. Over residues 392–437 the composition is skewed to pro residues; it reads GYAPPPQGYPPQGYPPQGYPPQGYPPQGYPPPPQGAPPQGAPPAAP.

This sequence belongs to the G-protein coupled receptor 1 family. Opsin subfamily. Post-translationally, contains one covalently linked retinal chromophore. Upon light absorption, the covalently bound 11-cis-retinal is converted to all-trans-retinal. After hydrolysis of the Schiff base and release of the covalently bound all-trans-retinal, active rhodopsin is regenerated by binding of a fresh molecule of 11-cis-retinal. Retina, rhabdomere membrane of photoreceptor cells (at protein level).

The protein localises to the cell projection. It is found in the rhabdomere membrane. In terms of biological role, photoreceptor required for image-forming vision at low light intensity. Light-induced isomerization of 11-cis to all-trans retinal triggers a conformational change that activates signaling via G-proteins. Signaling mediates the activation of phospholipase C. Subsequent receptor phosphorylation mediates displacement of the bound G-protein alpha subunit by arrestin and terminates signaling. In Todarodes pacificus (Japanese flying squid), this protein is Rhodopsin (RHO).